The sequence spans 1338 residues: Phosphoribosylformylglycinamidine synthase (1338 aa).

Phosphoserine is present on S215. Residues 322–333 (GATTGTGGRIRD) and 402–404 (AGF) contribute to the ATP site. Residue S569 is modified to Phosphoserine. Phosphothreonine occurs at positions 619 and 623. A706 is an ATP binding site. Mg(2+) is bound by residues D707, E746, N750, and D909. Residue S911 participates in ATP binding. The 239-residue stretch at 1064 to 1302 (RVAILREEGS…AVMPHPERAV (239 aa)) folds into the Glutamine amidotransferase type-1 domain. C1158 (nucleophile) is an active-site residue. Catalysis depends on residues H1297 and E1299.

This sequence in the N-terminal section; belongs to the FGAMS family.

Its subcellular location is the cytoplasm. The enzyme catalyses N(2)-formyl-N(1)-(5-phospho-beta-D-ribosyl)glycinamide + L-glutamine + ATP + H2O = 2-formamido-N(1)-(5-O-phospho-beta-D-ribosyl)acetamidine + L-glutamate + ADP + phosphate + H(+). It participates in purine metabolism; IMP biosynthesis via de novo pathway; 5-amino-1-(5-phospho-D-ribosyl)imidazole from N(2)-formyl-N(1)-(5-phospho-D-ribosyl)glycinamide: step 1/2. Its function is as follows. Phosphoribosylformylglycinamidine synthase involved in the purines biosynthetic pathway. Catalyzes the ATP-dependent conversion of formylglycinamide ribonucleotide (FGAR) and glutamine to yield formylglycinamidine ribonucleotide (FGAM) and glutamate. The polypeptide is Phosphoribosylformylglycinamidine synthase (PFAS) (Homo sapiens (Human)).